Reading from the N-terminus, the 280-residue chain is Large ribosomal subunit protein uL2 (280 aa).

Disordered stretches follow at residues 1–58 (MAIR…GGGH) and 226–280 (MNPV…KHGR). Composition is skewed to basic residues over residues 37-58 (LHGH…GGGH) and 268-280 (IVRR…KHGR).

It belongs to the universal ribosomal protein uL2 family. As to quaternary structure, part of the 50S ribosomal subunit. Forms a bridge to the 30S subunit in the 70S ribosome.

In terms of biological role, one of the primary rRNA binding proteins. Required for association of the 30S and 50S subunits to form the 70S ribosome, for tRNA binding and peptide bond formation. It has been suggested to have peptidyltransferase activity; this is somewhat controversial. Makes several contacts with the 16S rRNA in the 70S ribosome. The sequence is that of Large ribosomal subunit protein uL2 from Mycobacterium avium (strain 104).